The sequence spans 209 residues: Uracil phosphoribosyltransferase (209 aa).

5-phospho-alpha-D-ribose 1-diphosphate contacts are provided by residues Arg79, Arg104, and 131–139 (DPMLATGGS). Residues Ile194 and 199–201 (GDA) each bind uracil. Residue Asp200 coordinates 5-phospho-alpha-D-ribose 1-diphosphate.

This sequence belongs to the UPRTase family. The cofactor is Mg(2+).

The catalysed reaction is UMP + diphosphate = 5-phospho-alpha-D-ribose 1-diphosphate + uracil. It functions in the pathway pyrimidine metabolism; UMP biosynthesis via salvage pathway; UMP from uracil: step 1/1. Allosterically activated by GTP. In terms of biological role, catalyzes the conversion of uracil and 5-phospho-alpha-D-ribose 1-diphosphate (PRPP) to UMP and diphosphate. The polypeptide is Uracil phosphoribosyltransferase (Streptococcus salivarius).